The primary structure comprises 280 residues: Putative pyruvate, phosphate dikinase regulatory protein (280 aa).

An ADP-binding site is contributed by 152-159 (GISRTSKT).

Belongs to the pyruvate, phosphate/water dikinase regulatory protein family. PDRP subfamily.

The catalysed reaction is N(tele)-phospho-L-histidyl/L-threonyl-[pyruvate, phosphate dikinase] + ADP = N(tele)-phospho-L-histidyl/O-phospho-L-threonyl-[pyruvate, phosphate dikinase] + AMP + H(+). It carries out the reaction N(tele)-phospho-L-histidyl/O-phospho-L-threonyl-[pyruvate, phosphate dikinase] + phosphate + H(+) = N(tele)-phospho-L-histidyl/L-threonyl-[pyruvate, phosphate dikinase] + diphosphate. Functionally, bifunctional serine/threonine kinase and phosphorylase involved in the regulation of the pyruvate, phosphate dikinase (PPDK) by catalyzing its phosphorylation/dephosphorylation. In Clostridioides difficile (strain 630) (Peptoclostridium difficile), this protein is Putative pyruvate, phosphate dikinase regulatory protein.